The sequence spans 332 residues: 2,3-diketo-L-gulonate reductase (332 aa).

The active-site Proton donor is His44. Residues 168–174, 224–225, and 304–306 each bind NAD(+); these read ITMVDMS, WK, and GHE.

The protein belongs to the LDH2/MDH2 oxidoreductase family. DlgD subfamily. In terms of assembly, homodimer.

It is found in the cytoplasm. It carries out the reaction 3-dehydro-L-gulonate + NAD(+) = 2,3-dioxo-L-gulonate + NADH + H(+). The catalysed reaction is 3-dehydro-L-gulonate + NADP(+) = 2,3-dioxo-L-gulonate + NADPH + H(+). Its function is as follows. Catalyzes the reduction of 2,3-diketo-L-gulonate in the presence of NADH, to form 3-keto-L-gulonate. In Mannheimia succiniciproducens (strain KCTC 0769BP / MBEL55E), this protein is 2,3-diketo-L-gulonate reductase.